The sequence spans 407 residues: Aminomethyltransferase, mitochondrial (407 aa).

A mitochondrion-targeting transit peptide spans 1 to 29 (MRGGLWQLGQSITRRLGQSDKKTIVRRCY). Substrate is bound by residues Glu-234, Arg-265, and Tyr-403.

Belongs to the GcvT family. The glycine cleavage system is composed of four proteins: P, T, L and H.

It is found in the mitochondrion. The catalysed reaction is N(6)-[(R)-S(8)-aminomethyldihydrolipoyl]-L-lysyl-[protein] + (6S)-5,6,7,8-tetrahydrofolate = N(6)-[(R)-dihydrolipoyl]-L-lysyl-[protein] + (6R)-5,10-methylene-5,6,7,8-tetrahydrofolate + NH4(+). Its function is as follows. The glycine cleavage system catalyzes the degradation of glycine. This Flaveria anomala (Yellowtops) protein is Aminomethyltransferase, mitochondrial (GDCST).